The chain runs to 570 residues: MSEKHPGPLVVEGKLTDAERMKLESNYLRGTIAEDLNDGLTGGFKGDNFLLIRFHGMYQQDDRDIRAERAEQKLEPRHAMLLRCRLPGGVITTKQWQAIDKFAGENTIYGSIRLTNRQTFQFHGILKKNVKPVHQMLHSVGLDALATANDMNRNVLCTSNPYESQLHAEAYEWAKKISEHLLPRTRAYAEIWLDQEKVATTDEEPILGQTYLPRKFKTTVVIPPQNDIDLHANDMNFVAIAENGKLVGFNLLVGGGLSIEHGNKKTYARTASEFGYLPLEHTLAVAEAVVTTQRDWGNRTDRKNAKTKYTLERVGVETFKAEVERRAGIKFEPIRPYEFTGRGDRIGWVKGIDDNWHLTLFIENGRILDYPGRPLKTGLLEIAKIHKGDFRITANQNLIIAGVPESEKAKIEKIAKESGLMNAVTPQRENSMACVSFPTCPLAMAEAERFLPSFIDNIDNLMVKHGVSDEHIVMRVTGCPNGCGRAMLAEVGLVGKAPGRYNLHLGGNRIGTRIPRMYKENITEPEILASLDELIGRWAKEREAGEGFGDFTVRAGIIRPVLDPARDLWD.

The [4Fe-4S] cluster site is built by cysteine 434, cysteine 440, cysteine 479, and cysteine 483. Cysteine 483 provides a ligand contact to siroheme.

Belongs to the nitrite and sulfite reductase 4Fe-4S domain family. Alpha(8)-beta(8). The alpha component is a flavoprotein, the beta component is a hemoprotein. It depends on siroheme as a cofactor. The cofactor is [4Fe-4S] cluster.

The enzyme catalyses hydrogen sulfide + 3 NADP(+) + 3 H2O = sulfite + 3 NADPH + 4 H(+). The protein operates within sulfur metabolism; hydrogen sulfide biosynthesis; hydrogen sulfide from sulfite (NADPH route): step 1/1. Component of the sulfite reductase complex that catalyzes the 6-electron reduction of sulfite to sulfide. This is one of several activities required for the biosynthesis of L-cysteine from sulfate. The chain is Sulfite reductase [NADPH] hemoprotein beta-component from Shigella flexneri.